A 311-amino-acid polypeptide reads, in one-letter code: Dof zinc finger protein DOF1.4 (311 aa).

Residues 1–12 (MQSKNMIVASSH) are compositionally biased toward polar residues. Residues 1 to 29 (MQSKNMIVASSHQQQQQQQPQQPQPQLKC) are disordered. Residues 13-26 (QQQQQQQPQQPQPQ) are compositionally biased toward low complexity. The Dof-type zinc-finger motif lies at 27–81 (LKCPRCDSSNTKFCYYNNYSLSQPRHFCKACKRYWTRGGTLRNVPVGGSYRKNKR). Zn(2+)-binding residues include Cys29, Cys32, Cys54, and Cys57. Residues 72–110 (VGGSYRKNKRVKRPSTATTTTASTVSTTNSSSPNNPHQI) are disordered. Residues 85–107 (PSTATTTTASTVSTTNSSSPNNP) show a composition bias toward low complexity.

Its subcellular location is the nucleus. Functionally, transcription factor that binds specifically to a 5'-AA[AG]G-3' consensus core sequence. This Arabidopsis thaliana (Mouse-ear cress) protein is Dof zinc finger protein DOF1.4 (DOF1.4).